A 459-amino-acid polypeptide reads, in one-letter code: Ribulose bisphosphate carboxylase large chain (459 aa).

Residue Lys-4 is modified to N6,N6,N6-trimethyllysine. Asn-113 and Thr-163 together coordinate substrate. Lys-165 acts as the Proton acceptor in catalysis. Lys-167 provides a ligand contact to substrate. Lys-191, Asp-193, and Glu-194 together coordinate Mg(2+). At Lys-191 the chain carries N6-carboxylysine. His-284 serves as the catalytic Proton acceptor. Positions 285, 317, and 369 each coordinate substrate.

This sequence belongs to the RuBisCO large chain family. Type I subfamily. In terms of assembly, heterohexadecamer of 8 large chains and 8 small chains; disulfide-linked. The disulfide link is formed within the large subunit homodimers. It depends on Mg(2+) as a cofactor. The disulfide bond which can form in the large chain dimeric partners within the hexadecamer appears to be associated with oxidative stress and protein turnover.

It is found in the plastid. It localises to the chloroplast. It catalyses the reaction 2 (2R)-3-phosphoglycerate + 2 H(+) = D-ribulose 1,5-bisphosphate + CO2 + H2O. The enzyme catalyses D-ribulose 1,5-bisphosphate + O2 = 2-phosphoglycolate + (2R)-3-phosphoglycerate + 2 H(+). Its function is as follows. RuBisCO catalyzes two reactions: the carboxylation of D-ribulose 1,5-bisphosphate, the primary event in carbon dioxide fixation, as well as the oxidative fragmentation of the pentose substrate in the photorespiration process. Both reactions occur simultaneously and in competition at the same active site. The polypeptide is Ribulose bisphosphate carboxylase large chain (Heuchera micrantha (Alum root)).